Reading from the N-terminus, the 215-residue chain is EGDRGASKNWKLSIRCGGYTLKVLTENKFLPEPPSTRKKRILESHNNTLVDPCEEHKKKNPDASVKFSEFLKKRSEMWKTIFAKEKGKFEDMAKADKAHYEREMKTYIPPKGEKKKKFKDPNAPKRPPLAFFLFCSEYRPKIKGEHPGLSIDDVVKKLAGMWNNTAASDKQFYEKKAAKLKEKYKKDIAACRAKGKPNSATKRVVKAEKSKKKKE.

In terms of domain architecture, SAND spans 1 to 31 (EGDRGASKNWKLSIRCGGYTLKVLTENKFLP). 2 DNA-binding regions (HMG box) span residues 32 to 108 (EPPS…KTYI) and 124 to 192 (PKRP…AACR). The short motif at 72 to 89 (KKRSEMWKTIFAKEKGKF) is the Nuclear localization signal element. Disordered regions lie at residues 104 to 124 (MKTY…PNAP) and 193 to 215 (AKGK…KKKE).

In terms of assembly, homodimer. Interacts with members of the HP1 family of nonhistone chromosomal protein, such as CBX5 and CBX3 via the PxVxL motif. Interacts with ETS1; the interaction is direct and modulates ETS1 transcriptional activity. Interacts with the MRN complex which is composed of two heterodimers RAD50/MRE11 associated with a single NBN; recruits the complex to PML-related bodies. Interacts with HIPK2; positively regulates TP53-dependent transcription. Interacts with CASP8AP2; may negatively regulate CASP8AP2 export from the nucleus to the cytoplasm. Post-translationally, phosphorylated. In terms of processing, sumoylated. Sumoylated with SUMO1. Sumoylation depends on a functional nuclear localization signal but is not necessary for nuclear import or nuclear body targeting. Sumoylation may stabilize the interaction with CBX5.

It is found in the nucleus. The protein localises to the PML body. The protein resides in the nuclear body. Its subcellular location is the cytoplasm. Together with PML, this tumor suppressor is a major constituent of the PML bodies, a subnuclear organelle involved in a large number of physiological processes including cell growth, differentiation and apoptosis. Functions as a transcriptional coactivator of ETS1 and ETS2. Under certain conditions, it may also act as a corepressor of ETS1 preventing its binding to DNA. Through the regulation of ETS1 it may play a role in angiogenesis, controlling endothelial cell motility and invasion. Through interaction with the MRN complex it may be involved in the regulation of telomeres lengthening. May also regulate TP53-mediated transcription and through CASP8AP2, regulate FAS-mediated apoptosis. May also play a role in infection by viruses through mechanisms that may involve chromatin and/or transcriptional regulation. This chain is Nuclear autoantigen Sp-100 (SP100), found in Pan troglodytes (Chimpanzee).